Consider the following 478-residue polypeptide: Amino acid oxidase imqH (478 aa).

The signal sequence occupies residues 1 to 22 (MPAPKSIIIVGSGVFGLSTAHA). Residues valine 14, phenylalanine 15, aspartate 38, asparagine 53, alanine 57, asparagine 58, arginine 63, and isoleucine 64 each coordinate FAD. Residues asparagine 97 and asparagine 167 are each glycosylated (N-linked (GlcNAc...) asparagine). Valine 208 is an FAD binding site. Cysteine 399 carries the post-translational modification S-8alpha-FAD cysteine. FAD is bound by residues phenylalanine 432 and lysine 433.

It belongs to the MSOX/MTOX family. Dimer. It depends on FAD as a cofactor.

It participates in secondary metabolite biosynthesis. Nonribosomal peptide synthetase; part of the gene cluster that mediates the biosynthesis of imizoquins A to D, tripeptide-derived alkaloids that serve a protective role against oxidative stress that are essential for normal germination. ImqB is a canonical three-module NRPS that assembles the tripeptide backbone of the imizoquins via condensation of Trp, Tyr, and Leu-derived precursors. N-methylation by imqF and phenol oxidation by imqC, followed by cyclization via the FAD-dependent oxidase imqH carry out the three-step transformation of L-tyrosine into tetrahydroisoquinoline. Importantly, this sequence requires the presence of a free amine in the tyrosine moiety, indicating that isoquinoline formation occurs prior to peptide bond formation. The imidazolidin-4-one ring of imizoquins could form following additional oxidation of the methyl-derived bridgehead carbon by imqH. Lastly, O-methylation by imqG and leucine hydroxylation by imqE complete biosynthesis of the imizoquins. The sequence is that of Amino acid oxidase imqH from Aspergillus flavus (strain ATCC 200026 / FGSC A1120 / IAM 13836 / NRRL 3357 / JCM 12722 / SRRC 167).